The sequence spans 67 residues: Conotoxin LeDr192 (67 aa).

The first 19 residues, 1 to 19 (MRCFPVFIILLLLIASAPC), serve as a signal peptide directing secretion. The propeptide occupies 20–49 (FDARTKTDDDVPLSPLRDNLKRTIRTRLNI). A Threonine amide modification is found at T65.

Belongs to the conotoxin T superfamily. In terms of processing, contains 2 disulfide bonds that can be either 'C1-C3, C2-C4' or 'C1-C4, C2-C3', since these disulfide connectivities have been observed for conotoxins with cysteine framework V (for examples, see AC P0DQQ7 and AC P81755). As to expression, expressed by the venom duct.

The protein resides in the secreted. This is Conotoxin LeDr192 from Conus litteratus (Lettered cone).